Here is a 459-residue protein sequence, read N- to C-terminus: Cysteine--tRNA ligase (459 aa).

Residue cysteine 28 coordinates Zn(2+). The 'HIGH' region motif lies at 30–40 (VTVYDLCHIGH). Positions 209, 234, and 238 each coordinate Zn(2+). The 'KMSKS' region signature appears at 266-270 (KMSKS). An ATP-binding site is contributed by lysine 269.

This sequence belongs to the class-I aminoacyl-tRNA synthetase family. In terms of assembly, monomer. Requires Zn(2+) as cofactor.

Its subcellular location is the cytoplasm. The catalysed reaction is tRNA(Cys) + L-cysteine + ATP = L-cysteinyl-tRNA(Cys) + AMP + diphosphate. This is Cysteine--tRNA ligase from Haemophilus influenzae (strain 86-028NP).